We begin with the raw amino-acid sequence, 138 residues long: MLSPQKTKFRKQHRGRMKGVSHRRGNHICFGRFALQALEPAWITSGQIEAGRRAITRYARRGGKIWVRIFPDKPITMRPAETRMGSGKGSPEYWVSVIRPYRILYEMGGVSETVARAATEIAAYKMPIRTRFVTASPV.

Residues 1 to 21 (MLSPQKTKFRKQHRGRMKGVS) are disordered. Positions 7-21 (TKFRKQHRGRMKGVS) are enriched in basic residues.

Belongs to the universal ribosomal protein uL16 family. Part of the 50S ribosomal subunit.

It is found in the plastid. Its subcellular location is the chloroplast. The sequence is that of Large ribosomal subunit protein uL16c from Cycas taitungensis (Prince sago).